Consider the following 371-residue polypeptide: 4-hydroxy-3-methylbut-2-en-1-yl diphosphate synthase (flavodoxin) (371 aa).

Cys-272, Cys-275, Cys-307, and Glu-314 together coordinate [4Fe-4S] cluster.

It belongs to the IspG family. [4Fe-4S] cluster is required as a cofactor.

It carries out the reaction (2E)-4-hydroxy-3-methylbut-2-enyl diphosphate + oxidized [flavodoxin] + H2O + 2 H(+) = 2-C-methyl-D-erythritol 2,4-cyclic diphosphate + reduced [flavodoxin]. It participates in isoprenoid biosynthesis; isopentenyl diphosphate biosynthesis via DXP pathway; isopentenyl diphosphate from 1-deoxy-D-xylulose 5-phosphate: step 5/6. Functionally, converts 2C-methyl-D-erythritol 2,4-cyclodiphosphate (ME-2,4cPP) into 1-hydroxy-2-methyl-2-(E)-butenyl 4-diphosphate. This is 4-hydroxy-3-methylbut-2-en-1-yl diphosphate synthase (flavodoxin) from Pseudomonas paraeruginosa (strain DSM 24068 / PA7) (Pseudomonas aeruginosa (strain PA7)).